Here is a 257-residue protein sequence, read N- to C-terminus: Hydroxyacylglutathione hydrolase (257 aa).

Residues H54, H56, D58, H59, H113, D137, and H175 each contribute to the Zn(2+) site.

Belongs to the metallo-beta-lactamase superfamily. Glyoxalase II family. Monomer. Requires Zn(2+) as cofactor.

It catalyses the reaction an S-(2-hydroxyacyl)glutathione + H2O = a 2-hydroxy carboxylate + glutathione + H(+). Its pathway is secondary metabolite metabolism; methylglyoxal degradation; (R)-lactate from methylglyoxal: step 2/2. In terms of biological role, thiolesterase that catalyzes the hydrolysis of S-D-lactoyl-glutathione to form glutathione and D-lactic acid. This Synechocystis sp. (strain ATCC 27184 / PCC 6803 / Kazusa) protein is Hydroxyacylglutathione hydrolase.